Consider the following 154-residue polypeptide: tRNA (cytidine(34)-2'-O)-methyltransferase (154 aa).

The S-adenosyl-L-methionine site is built by L78, G100, L122, and S130.

The protein belongs to the class IV-like SAM-binding methyltransferase superfamily. RNA methyltransferase TrmH family. TrmL subfamily. In terms of assembly, homodimer.

It is found in the cytoplasm. The catalysed reaction is cytidine(34) in tRNA + S-adenosyl-L-methionine = 2'-O-methylcytidine(34) in tRNA + S-adenosyl-L-homocysteine + H(+). It carries out the reaction 5-carboxymethylaminomethyluridine(34) in tRNA(Leu) + S-adenosyl-L-methionine = 5-carboxymethylaminomethyl-2'-O-methyluridine(34) in tRNA(Leu) + S-adenosyl-L-homocysteine + H(+). In terms of biological role, methylates the ribose at the nucleotide 34 wobble position in the two leucyl isoacceptors tRNA(Leu)(CmAA) and tRNA(Leu)(cmnm5UmAA). Catalyzes the methyl transfer from S-adenosyl-L-methionine to the 2'-OH of the wobble nucleotide. This is tRNA (cytidine(34)-2'-O)-methyltransferase from Methylovorus glucosotrophus (strain SIP3-4).